Here is a 581-residue protein sequence, read N- to C-terminus: Proline--tRNA ligase (581 aa).

This sequence belongs to the class-II aminoacyl-tRNA synthetase family. ProS type 1 subfamily. Homodimer.

Its subcellular location is the cytoplasm. The enzyme catalyses tRNA(Pro) + L-proline + ATP = L-prolyl-tRNA(Pro) + AMP + diphosphate. Functionally, catalyzes the attachment of proline to tRNA(Pro) in a two-step reaction: proline is first activated by ATP to form Pro-AMP and then transferred to the acceptor end of tRNA(Pro). As ProRS can inadvertently accommodate and process non-cognate amino acids such as alanine and cysteine, to avoid such errors it has two additional distinct editing activities against alanine. One activity is designated as 'pretransfer' editing and involves the tRNA(Pro)-independent hydrolysis of activated Ala-AMP. The other activity is designated 'posttransfer' editing and involves deacylation of mischarged Ala-tRNA(Pro). The misacylated Cys-tRNA(Pro) is not edited by ProRS. The protein is Proline--tRNA ligase of Acidovorax ebreus (strain TPSY) (Diaphorobacter sp. (strain TPSY)).